The following is a 438-amino-acid chain: Histidine--tRNA ligase (438 aa).

This sequence belongs to the class-II aminoacyl-tRNA synthetase family. As to quaternary structure, homodimer.

The protein localises to the cytoplasm. It carries out the reaction tRNA(His) + L-histidine + ATP = L-histidyl-tRNA(His) + AMP + diphosphate + H(+). This chain is Histidine--tRNA ligase, found in Aromatoleum aromaticum (strain DSM 19018 / LMG 30748 / EbN1) (Azoarcus sp. (strain EbN1)).